Reading from the N-terminus, the 806-residue chain is Leucine--tRNA ligase (806 aa).

A 'HIGH' region motif is present at residues Pro-38 to His-48. Residues Lys-572 to Ser-576 carry the 'KMSKS' region motif. Lys-575 is a binding site for ATP.

Belongs to the class-I aminoacyl-tRNA synthetase family.

It is found in the cytoplasm. It carries out the reaction tRNA(Leu) + L-leucine + ATP = L-leucyl-tRNA(Leu) + AMP + diphosphate. In Helicobacter acinonychis (strain Sheeba), this protein is Leucine--tRNA ligase.